Reading from the N-terminus, the 234-residue chain is Mannose/glucose-specific lectin Cramoll (234 aa).

Mn(2+) contacts are provided by glutamate 8 and aspartate 10. Ca(2+) is bound by residues aspartate 10, tyrosine 12, asparagine 14, and aspartate 19. Tyrosine 12 provides a ligand contact to a carbohydrate. Positions 19, 24, and 34 each coordinate Mn(2+). Leucine 99–tyrosine 100 contributes to the a carbohydrate binding site. A Ca(2+)-binding site is contributed by aspartate 205. Arginine 225 contributes to the a carbohydrate binding site.

This sequence belongs to the leguminous lectin family. In terms of assembly, homotetramer. Post-translationally, the alpha and beta chains are produced by partial proteolytic processing of the lectin precursor by an asparaginyl endopeptidase.

Functionally, glucose/D-mannose specific lectin. The chain is Mannose/glucose-specific lectin Cramoll from Cratylia mollis (Camaratu bean).